A 374-amino-acid chain; its full sequence is Glutamate 5-kinase (374 aa).

Lys-16 contributes to the ATP binding site. Positions 56, 143, and 155 each coordinate substrate. ATP contacts are provided by residues 175 to 176 and 217 to 223; these read TD and SGGMLTK. Residues 282 to 360 enclose the PUA domain; the sequence is RGALILDDGA…SNIGAILGYK (79 aa).

Belongs to the glutamate 5-kinase family.

The protein localises to the cytoplasm. The catalysed reaction is L-glutamate + ATP = L-glutamyl 5-phosphate + ADP. It functions in the pathway amino-acid biosynthesis; L-proline biosynthesis; L-glutamate 5-semialdehyde from L-glutamate: step 1/2. Functionally, catalyzes the transfer of a phosphate group to glutamate to form L-glutamate 5-phosphate. The protein is Glutamate 5-kinase of Marinomonas sp. (strain MWYL1).